The chain runs to 505 residues: Protein disulfide-isomerase A3 (505 aa).

An N-terminal signal peptide occupies residues 1-24 (MSVPRPSRAALLLLVPLLALSAGA). Thioredoxin domains lie at 25–131 (SDVV…KQAG) and 341–483 (SRDG…REAT). Catalysis depends on nucleophile residues C55 and C58. 3 cysteine pairs are disulfide-bonded: C55/C58, C83/C90, and C404/C407. Active-site nucleophile residues include C404 and C407. The interval 486–505 (PVLQEEDKAKKSKKKAKEDL) is disordered. Over residues 495–505 (KKSKKKAKEDL) the composition is skewed to basic residues. The Prevents secretion from ER signature appears at 502-505 (KEDL).

It belongs to the protein disulfide isomerase family.

The protein localises to the endoplasmic reticulum. Its subcellular location is the endoplasmic reticulum lumen. The protein resides in the melanosome. It carries out the reaction Catalyzes the rearrangement of -S-S- bonds in proteins.. In terms of biological role, protein disulfide isomerase that catalyzes the formation, isomerization, and reduction or oxidation of disulfide bonds in client proteins and functions as a protein folding chaperone. The sequence is that of Protein disulfide-isomerase A3 (PDIA3) from Gallus gallus (Chicken).